The primary structure comprises 232 residues: AA9 family lytic polysaccharide monooxygenase C (232 aa).

The first 19 residues, 1-19 (MKAAVSLALLVAVAGAASA), serve as a signal peptide directing secretion. Cu(2+) contacts are provided by His-20 and His-91. A disulfide bridge links Cys-61 with Cys-180. The O2 site is built by His-166 and Gln-175. Tyr-177 serves as a coordination point for Cu(2+). Residue Asn-184 is glycosylated (N-linked (GlcNAc...) asparagine).

The protein belongs to the polysaccharide monooxygenase AA9 family. The cofactor is Cu(2+).

It is found in the secreted. The catalysed reaction is [(1-&gt;4)-beta-D-glucosyl]n+m + reduced acceptor + O2 = 4-dehydro-beta-D-glucosyl-[(1-&gt;4)-beta-D-glucosyl]n-1 + [(1-&gt;4)-beta-D-glucosyl]m + acceptor + H2O.. Lytic polysaccharide monooxygenase (LPMO) that depolymerizes crystalline and amorphous polysaccharides via the oxidation of scissile alpha- or beta-(1-4)-glycosidic bonds, yielding C1 or C4 oxidation products. Catalysis by LPMOs requires the reduction of the active-site copper from Cu(II) to Cu(I) by a reducing agent and H(2)O(2) or O(2) as a cosubstrate. This is AA9 family lytic polysaccharide monooxygenase C from Malbranchea cinnamomea (Thermophilic fungus).